The sequence spans 188 residues: Nicotinamide-nucleotide adenylyltransferase (188 aa).

It belongs to the archaeal NMN adenylyltransferase family.

It localises to the cytoplasm. It carries out the reaction beta-nicotinamide D-ribonucleotide + ATP + H(+) = diphosphate + NAD(+). It participates in cofactor biosynthesis; NAD(+) biosynthesis; NAD(+) from nicotinamide D-ribonucleotide: step 1/1. The sequence is that of Nicotinamide-nucleotide adenylyltransferase from Thermococcus kodakarensis (strain ATCC BAA-918 / JCM 12380 / KOD1) (Pyrococcus kodakaraensis (strain KOD1)).